Here is a 425-residue protein sequence, read N- to C-terminus: Histidinol dehydrogenase (425 aa).

The substrate site is built by serine 231, glutamine 253, and histidine 256. Zn(2+)-binding residues include glutamine 253 and histidine 256. Catalysis depends on proton acceptor residues glutamate 321 and histidine 322. Residues histidine 322, aspartate 355, glutamate 409, and histidine 414 each contribute to the substrate site. Aspartate 355 lines the Zn(2+) pocket. Zn(2+) is bound at residue histidine 414.

The protein belongs to the histidinol dehydrogenase family. Zn(2+) serves as cofactor.

It catalyses the reaction L-histidinol + 2 NAD(+) + H2O = L-histidine + 2 NADH + 3 H(+). It functions in the pathway amino-acid biosynthesis; L-histidine biosynthesis; L-histidine from 5-phospho-alpha-D-ribose 1-diphosphate: step 9/9. Its function is as follows. Catalyzes the sequential NAD-dependent oxidations of L-histidinol to L-histidinaldehyde and then to L-histidine. This Carboxydothermus hydrogenoformans (strain ATCC BAA-161 / DSM 6008 / Z-2901) protein is Histidinol dehydrogenase.